The chain runs to 412 residues: Phosphatidylinositol 3,4,5-trisphosphate 3-phosphatase and protein-tyrosine-phosphatase PTEN1 (412 aa).

One can recognise a Phosphatase tensin-type domain in the interval 42–211; it reads RRLIIGGYDL…KYWSDLLSFS (170 aa). Cysteine 152 (phosphocysteine intermediate) is an active-site residue. The region spanning 239 to 396 is the C2 tensin-type domain; that stretch reads VDSVFFVVSE…FSLELLFGPA (158 aa).

It belongs to the PTEN phosphatase protein family. In terms of tissue distribution, expressed exclusively in pollen grains during the late stage of development (at protein level).

It carries out the reaction O-phospho-L-tyrosyl-[protein] + H2O = L-tyrosyl-[protein] + phosphate. The catalysed reaction is a 1,2-diacyl-sn-glycero-3-phospho-(1D-myo-inositol-3,4,5-trisphosphate) + H2O = a 1,2-diacyl-sn-glycero-3-phospho-(1D-myo-inositol-4,5-bisphosphate) + phosphate. With respect to regulation, inhibited by vanadate. Protein tyrosine phosphatase that also exhibits lipid phosphatase activity. Can use phosphatidylinositol substrates such as PtdIns(3,4,5)P(3) as substrate. Pollen-specific phosphatase required for pollen development. The sequence is that of Phosphatidylinositol 3,4,5-trisphosphate 3-phosphatase and protein-tyrosine-phosphatase PTEN1 from Arabidopsis thaliana (Mouse-ear cress).